A 301-amino-acid chain; its full sequence is Acetyl-coenzyme A carboxylase carboxyl transferase subunit beta (301 aa).

Residues 25-294 (LWIKCPETGE…SAANDMNSGA (270 aa)) enclose the CoA carboxyltransferase N-terminal domain.

Belongs to the AccD/PCCB family. As to quaternary structure, acetyl-CoA carboxylase is a heterohexamer composed of biotin carboxyl carrier protein (AccB), biotin carboxylase (AccC) and two subunits each of ACCase subunit alpha (AccA) and ACCase subunit beta (AccD).

It localises to the cytoplasm. It carries out the reaction N(6)-carboxybiotinyl-L-lysyl-[protein] + acetyl-CoA = N(6)-biotinyl-L-lysyl-[protein] + malonyl-CoA. Its pathway is lipid metabolism; malonyl-CoA biosynthesis; malonyl-CoA from acetyl-CoA: step 1/1. Component of the acetyl coenzyme A carboxylase (ACC) complex. Biotin carboxylase (BC) catalyzes the carboxylation of biotin on its carrier protein (BCCP) and then the CO(2) group is transferred by the transcarboxylase to acetyl-CoA to form malonyl-CoA. The sequence is that of Acetyl-coenzyme A carboxylase carboxyl transferase subunit beta from Rhizobium leguminosarum bv. trifolii (strain WSM1325).